Consider the following 491-residue polypeptide: Glutamyl-tRNA(Gln) amidotransferase subunit A (491 aa).

Residues K78 and S158 each act as charge relay system in the active site. The active-site Acyl-ester intermediate is the S182.

The protein belongs to the amidase family. GatA subfamily. As to quaternary structure, heterotrimer of A, B and C subunits.

The catalysed reaction is L-glutamyl-tRNA(Gln) + L-glutamine + ATP + H2O = L-glutaminyl-tRNA(Gln) + L-glutamate + ADP + phosphate + H(+). Its function is as follows. Allows the formation of correctly charged Gln-tRNA(Gln) through the transamidation of misacylated Glu-tRNA(Gln) in organisms which lack glutaminyl-tRNA synthetase. The reaction takes place in the presence of glutamine and ATP through an activated gamma-phospho-Glu-tRNA(Gln). The chain is Glutamyl-tRNA(Gln) amidotransferase subunit A from Afipia carboxidovorans (strain ATCC 49405 / DSM 1227 / KCTC 32145 / OM5) (Oligotropha carboxidovorans).